Reading from the N-terminus, the 300-residue chain is MTDTNATRCGYVAIVGRPNVGKSTLLNHILGQKLAITSRKPQTTRHNMLGIKTEGDVQAIYVDTPGMHKGGEKALNRYMNKTASAALKDVDVVIFVVDRTKWTEEDQMVLERVQYVTGPLIVALNKTDRIEDKAELMPHLSWLQEQLPNAQIIPISAQQGHNLDALEKVIADHLPENDHFFPEDQITDRSSRFLAAELVREKIMRQLGAELPYQITVEIEEFKQQGATLHIHALILVERDGQKKIIIGDKGERIKRIGTEARKDMELLFDSKIMLNLWVKVKGGWSDDERALRSLGYGDL.

The Era-type G domain occupies 8–176 (RCGYVAIVGR…EKVIADHLPE (169 aa)). The tract at residues 16-23 (GRPNVGKS) is G1. A GTP-binding site is contributed by 16-23 (GRPNVGKS). Positions 42–46 (QTTRH) are G2. The segment at 63–66 (DTPG) is G3. Residues 63 to 67 (DTPGM) and 125 to 128 (NKTD) each bind GTP. The tract at residues 125–128 (NKTD) is G4. The tract at residues 155–157 (ISA) is G5. Residues 199–283 (VREKIMRQLG…MLNLWVKVKG (85 aa)) form the KH type-2 domain.

It belongs to the TRAFAC class TrmE-Era-EngA-EngB-Septin-like GTPase superfamily. Era GTPase family. In terms of assembly, monomer.

Its subcellular location is the cytoplasm. The protein localises to the cell inner membrane. In terms of biological role, an essential GTPase that binds both GDP and GTP, with rapid nucleotide exchange. Plays a role in 16S rRNA processing and 30S ribosomal subunit biogenesis and possibly also in cell cycle regulation and energy metabolism. The chain is GTPase Era from Pseudomonas fluorescens (strain Pf0-1).